Consider the following 114-residue polypeptide: Hemerythrin (114 aa).

Fe cation-binding residues include histidine 26, histidine 55, glutamate 59, histidine 74, histidine 78, histidine 102, and aspartate 107.

This sequence belongs to the hemerythrin family. Homooctamer.

Its function is as follows. Hemerythrin is a respiratory protein in blood cells of certain marine worms. The oxygen-binding site in each chain contains two iron atoms. The polypeptide is Hemerythrin (Phascolopsis gouldii (Peanut worm)).